A 129-amino-acid chain; its full sequence is Ribulose bisphosphate carboxylase small subunit (129 aa).

A disordered region spans residues 109–129; sequence LRMTRTESNGRSQHYMWETQR.

Belongs to the RuBisCO small chain family. As to quaternary structure, heterohexadecamer of 8 large and 8 small subunits.

Its function is as follows. RuBisCO catalyzes two reactions: the carboxylation of D-ribulose 1,5-bisphosphate, the primary event in carbon dioxide fixation, as well as the oxidative fragmentation of the pentose substrate. Both reactions occur simultaneously and in competition at the same active site. Although the small subunit is not catalytic it is essential for maximal activity. This Rhizobium meliloti (strain 1021) (Ensifer meliloti) protein is Ribulose bisphosphate carboxylase small subunit.